A 528-amino-acid chain; its full sequence is Beta-hexosaminidase subunit alpha (528 aa).

Residues 1–22 (MAGCRLWVSLLLAAALACLATA) form the signal peptide. Positions 23–88 (LWPWPQYIQT…PRPSFSKKQQ (66 aa)) are excised as a propeptide. Cys58 and Cys104 are oxidised to a cystine. 3 N-linked (GlcNAc...) asparagine glycosylation sites follow: Asn115, Asn157, and Asn295. A disulfide bridge links Cys277 with Cys328. Glu323 (proton donor) is an active-site residue. Residues 422–423 (NR) are critical for hydrolysis GM2 gangliosides. A glycan (N-linked (GlcNAc...) asparagine) is linked at Asn487. A disulfide bridge connects residues Cys504 and Cys521.

The protein belongs to the glycosyl hydrolase 20 family. As to quaternary structure, there are 3 beta-hexosaminidase isozymes: isozyme A (hexosaminidase A) is a heterodimer composed of one subunit alpha and one subunit beta (chain A and B); isozyme B (hexosaminidase B) is a homodimer of two beta subunits (two chains A and B); isozyme S (hexosaminidase S) is a homodimer of two alpha subunits. The composition of the dimer (isozyme A versus isozyme S) has a significant effect on the substrate specificity of the alpha subunit active site.

The protein resides in the lysosome. It catalyses the reaction Hydrolysis of terminal non-reducing N-acetyl-D-hexosamine residues in N-acetyl-beta-D-hexosaminides.. The enzyme catalyses N-acetyl-beta-D-galactosaminyl-(1-&gt;4)-beta-D-3-sulfogalactosyl-(1-&gt;4)-beta-D-glucosyl-(1&lt;-&gt;1')-ceramide + H2O = a beta-D-3-sulfogalactosyl-(1-&gt;4)-beta-D-glucosyl-(1&lt;-&gt;1')-ceramide + N-acetyl-beta-D-galactosamine. The catalysed reaction is a ganglioside GM2 (d18:1(4E)) + H2O = a ganglioside GM3 (d18:1(4E)) + N-acetyl-beta-D-galactosamine. It carries out the reaction a ganglioside GM2 + H2O = a ganglioside GM3 + N-acetyl-beta-D-galactosamine. It catalyses the reaction beta-D-GalNAc-(1-&gt;4)-alpha-L-IdoA-(1-&gt;3)-beta-D-GalNAc-4-sulfate-(1-&gt;4)-alpha-L-IdoA-(1-&gt;3)-D-GalNAc-4-sulfate + H2O = alpha-L-IdoA-(1-&gt;3)-beta-D-GalNAc-4-sulfate-(1-&gt;4)-alpha-L-IdoA-(1-&gt;3)-D-GalNAc-4-sulfate + N-acetyl-D-galactosamine. The enzyme catalyses N-acetyl-beta-D-6-sulfogalactosaminyl-(1-&gt;4)-alpha-L-iduronyl-(1-&gt;3)-N-acetyl-D-6-sulfogalactosamine + H2O = alpha-L-iduronyl-(1-&gt;3)-N-acetyl-D-6-sulfogalactosamine + N-acetyl-D-6-sulfogalactosamine. Addition of GM2A stimulates the hydrolysis of sulfated glycosphingolipid SM2 and the ganglioside GM2. Hydrolyzes the non-reducing end N-acetyl-D-hexosamine and/or sulfated N-acetyl-D-hexosamine of glycoconjugates, such as the oligosaccharide moieties from proteins and neutral glycolipids, or from certain mucopolysaccharides. The isozyme S is as active as the isozyme A on the anionic bis-sulfated glycans, the chondroitin-6-sulfate trisaccharide (C6S-3), and the dermatan sulfate pentasaccharide, and the sulfated glycosphingolipid SM2. The isozyme B does not hydrolyze each of these substrates, however hydrolyzes efficiently neutral oligosaccharide. Only the isozyme A is responsible for the degradation of GM2 gangliosides in the presence of GM2A. The sequence is that of Beta-hexosaminidase subunit alpha from Rattus norvegicus (Rat).